Reading from the N-terminus, the 255-residue chain is 4-hydroxy-tetrahydrodipicolinate reductase (255 aa).

NAD(+) contacts are provided by residues 9-14, D35, 89-91, and 115-118; these read GFKGKM, GTT, and APNF. The active-site Proton donor/acceptor is H145. H146 serves as a coordination point for (S)-2,3,4,5-tetrahydrodipicolinate. The Proton donor role is filled by K149. 155–156 serves as a coordination point for (S)-2,3,4,5-tetrahydrodipicolinate; that stretch reads GT.

It belongs to the DapB family.

The protein localises to the cytoplasm. It carries out the reaction (S)-2,3,4,5-tetrahydrodipicolinate + NAD(+) + H2O = (2S,4S)-4-hydroxy-2,3,4,5-tetrahydrodipicolinate + NADH + H(+). It catalyses the reaction (S)-2,3,4,5-tetrahydrodipicolinate + NADP(+) + H2O = (2S,4S)-4-hydroxy-2,3,4,5-tetrahydrodipicolinate + NADPH + H(+). The protein operates within amino-acid biosynthesis; L-lysine biosynthesis via DAP pathway; (S)-tetrahydrodipicolinate from L-aspartate: step 4/4. Catalyzes the conversion of 4-hydroxy-tetrahydrodipicolinate (HTPA) to tetrahydrodipicolinate. In Streptococcus pneumoniae serotype 19F (strain G54), this protein is 4-hydroxy-tetrahydrodipicolinate reductase.